The sequence spans 217 residues: Protein 33K (217 aa).

The interval 1-142 (MPPKGNKQAI…KEKTSAIATR (142 aa)) is disordered. The segment covering 24 to 68 (QWDEEEESWDDSQAEEVSDEEEMESWESLDEELEDKPPKDEEEEI) has biased composition (acidic residues). The segment covering 69–78 (IASAAAPSSK) has biased composition (low complexity). A compositionally biased stretch (basic and acidic residues) spans 123–136 (KRSEKTTRPRKEKT). The interval 160–187 (YAIFQQSRGQQLELKVKNRSLRSLTRSC) is necessary for nuclear subcellular location. Residues 166-186 (SRGQQLELKVKNRSLRSLTRS) form an RS-repeat; required for splicing enhancer activity region.

Belongs to the adenoviridae splicing factor family. In terms of assembly, homooligomer. Interacts with DBP; this interaction occurs at a unique vertex during genome packaging. Interacts with IVa2; this interaction occurs at a unique vertex during genome packaging and seems to potentiate IVa2 and 33K oligomerization. Phosphorylated in vitro by human PKA and PRKDC. PRKDC inhibits, whereas PKA activates the splicing factor.

The protein localises to the host nucleus. Its function is as follows. Promotes alternative splicing of late transcripts by promoting splicing at weak 3' splice sites. Required for the temporal activation of major late pre-mRNA splicing at late times of infection. Induces the splicing and expression of the late capsid vertex protein. Probably functions as the small terminase that is part of the molecular motor that translocates genomic DNA in empty capsid during DNA packaging. This motor is located at a unique vertex and comprises at least the IVa2 ATPase, the small terminase 33K and probably a portal. Forms a ring-like structure of about 17 nm in which genomic DNA is translocated into the capsid. Stimulates IVa2 ATPase activity in the presence of the viral genome. Once the DNA is packaged, the terminase detaches: the 33K protein is present in the empty particles, but not in the mature virions. Also involved in virion assembly. The sequence is that of Protein 33K from Human adenovirus F serotype 41 (HAdV-41).